Reading from the N-terminus, the 545-residue chain is T-complex protein 1 subunit gamma (545 aa).

Met-1 is subject to N-acetylmethionine. The segment at Met-1 to Ser-24 is disordered. Position 11 is a phosphoserine (Ser-11). Residue Lys-15 forms a Glycyl lysine isopeptide (Lys-Gly) (interchain with G-Cter in SUMO2) linkage. Residue Gly-42 participates in ADP binding. Gly-42 lines the ATP pocket. Asp-93 provides a ligand contact to Mg(2+). Gly-94, Thr-95, Thr-96, Ser-97, Thr-162, and Lys-163 together coordinate ADP. ATP-binding residues include Gly-94, Thr-95, and Thr-96. Ser-170 is subject to Phosphoserine. Position 222 is an N6-acetyllysine (Lys-222). 2 positions are modified to phosphoserine: Ser-243 and Ser-244. Phosphotyrosine is present on Tyr-247. Glycyl lysine isopeptide (Lys-Gly) (interchain with G-Cter in SUMO2) cross-links involve residues Lys-248 and Lys-249. Phosphoserine is present on Ser-252. A disulfide bond links Cys-366 and Cys-372. Lys-381 participates in a covalent cross-link: Glycyl lysine isopeptide (Lys-Gly) (interchain with G-Cter in SUMO2). Residue Gly-411 participates in ADP binding. Gly-411 contributes to the ATP binding site. Residues Thr-430 and Thr-459 each carry the phosphothreonine modification. 4 residues coordinate ADP: Gly-482, Glu-483, Glu-497, and Lys-502. Position 482 (Gly-482) interacts with ATP. Residue Glu-497 participates in ATP binding. The disordered stretch occupies residues His-526–Glu-545.

It belongs to the TCP-1 chaperonin family. In terms of assembly, component of the chaperonin-containing T-complex (TRiC), a hexadecamer composed of two identical back-to-back stacked rings enclosing a protein folding chamber. Each ring is made up of eight different subunits: TCP1/CCT1, CCT2, CCT3, CCT4, CCT5, CCT6A/CCT6, CCT7, CCT8. Interacts with PACRG. Interacts with DNAAF4. Interacts with DLEC1.

It is found in the cytoplasm. The catalysed reaction is ATP + H2O = ADP + phosphate + H(+). Component of the chaperonin-containing T-complex (TRiC), a molecular chaperone complex that assists the folding of actin, tubulin and other proteins upon ATP hydrolysis. The TRiC complex mediates the folding of WRAP53/TCAB1, thereby regulating telomere maintenance. As part of the TRiC complex may play a role in the assembly of BBSome, a complex involved in ciliogenesis regulating transports vesicles to the cilia. In Pongo abelii (Sumatran orangutan), this protein is T-complex protein 1 subunit gamma (CCT3).